Consider the following 173-residue polypeptide: Crossover junction endodeoxyribonuclease RuvC (173 aa).

Residues aspartate 8, glutamate 67, and aspartate 139 contribute to the active site. Residues aspartate 8, glutamate 67, and aspartate 139 each coordinate Mg(2+).

The protein belongs to the RuvC family. In terms of assembly, homodimer which binds Holliday junction (HJ) DNA. The HJ becomes 2-fold symmetrical on binding to RuvC with unstacked arms; it has a different conformation from HJ DNA in complex with RuvA. In the full resolvosome a probable DNA-RuvA(4)-RuvB(12)-RuvC(2) complex forms which resolves the HJ. The cofactor is Mg(2+).

The protein resides in the cytoplasm. It catalyses the reaction Endonucleolytic cleavage at a junction such as a reciprocal single-stranded crossover between two homologous DNA duplexes (Holliday junction).. In terms of biological role, the RuvA-RuvB-RuvC complex processes Holliday junction (HJ) DNA during genetic recombination and DNA repair. Endonuclease that resolves HJ intermediates. Cleaves cruciform DNA by making single-stranded nicks across the HJ at symmetrical positions within the homologous arms, yielding a 5'-phosphate and a 3'-hydroxyl group; requires a central core of homology in the junction. The consensus cleavage sequence is 5'-(A/T)TT(C/G)-3'. Cleavage occurs on the 3'-side of the TT dinucleotide at the point of strand exchange. HJ branch migration catalyzed by RuvA-RuvB allows RuvC to scan DNA until it finds its consensus sequence, where it cleaves and resolves the cruciform DNA. In Vibrio campbellii (strain ATCC BAA-1116), this protein is Crossover junction endodeoxyribonuclease RuvC.